A 280-amino-acid polypeptide reads, in one-letter code: Probable S-methyl-5'-thioinosine phosphorylase (280 aa).

Phosphate-binding positions include T8 and 50–51 (RH). A substrate-binding site is contributed by M175. T176 serves as a coordination point for phosphate. Residue 199 to 201 (NYA) participates in substrate binding.

This sequence belongs to the PNP/MTAP phosphorylase family. MTAP subfamily. As to quaternary structure, homotrimer.

It catalyses the reaction S-methyl-5'-thioinosine + phosphate = 5-(methylsulfanyl)-alpha-D-ribose 1-phosphate + hypoxanthine. It functions in the pathway purine metabolism; purine nucleoside salvage. In terms of biological role, catalyzes the reversible phosphorylation of S-methyl-5'-thioinosine (MTI) to hypoxanthine and 5-methylthioribose-1-phosphate. Involved in the breakdown of S-methyl-5'-thioadenosine (MTA), a major by-product of polyamine biosynthesis. Catabolism of (MTA) occurs via deamination to MTI and phosphorolysis to hypoxanthine. In Methanothermobacter thermautotrophicus (strain ATCC 29096 / DSM 1053 / JCM 10044 / NBRC 100330 / Delta H) (Methanobacterium thermoautotrophicum), this protein is Probable S-methyl-5'-thioinosine phosphorylase.